Consider the following 287-residue polypeptide: Ribonuclease Z (287 aa).

The Zn(2+) site is built by His64, His66, Asp68, His69, His124, Asp191, and His250. Asp68 serves as the catalytic Proton acceptor.

This sequence belongs to the RNase Z family. As to quaternary structure, homodimer. It depends on Zn(2+) as a cofactor.

The catalysed reaction is Endonucleolytic cleavage of RNA, removing extra 3' nucleotides from tRNA precursor, generating 3' termini of tRNAs. A 3'-hydroxy group is left at the tRNA terminus and a 5'-phosphoryl group is left at the trailer molecule.. Functionally, zinc phosphodiesterase, which displays some tRNA 3'-processing endonuclease activity. Probably involved in tRNA maturation, by removing a 3'-trailer from precursor tRNA. This Pyrobaculum neutrophilum (strain DSM 2338 / JCM 9278 / NBRC 100436 / V24Sta) (Thermoproteus neutrophilus) protein is Ribonuclease Z.